The following is a 374-amino-acid chain: Biotin synthase (374 aa).

The 228-residue stretch at 49 to 276 (NEVQVSTLLS…KSHVRLSAGR (228 aa)) folds into the Radical SAM core domain. C64, C68, and C71 together coordinate [4Fe-4S] cluster. Residues C108, C139, C199, and R271 each contribute to the [2Fe-2S] cluster site. Residues 344 to 374 (QQQEQAEGSNDLFIDATKPKVAAKQQHATEA) are disordered.

Belongs to the radical SAM superfamily. Biotin synthase family. In terms of assembly, homodimer. Requires [4Fe-4S] cluster as cofactor. The cofactor is [2Fe-2S] cluster.

The catalysed reaction is (4R,5S)-dethiobiotin + (sulfur carrier)-SH + 2 reduced [2Fe-2S]-[ferredoxin] + 2 S-adenosyl-L-methionine = (sulfur carrier)-H + biotin + 2 5'-deoxyadenosine + 2 L-methionine + 2 oxidized [2Fe-2S]-[ferredoxin]. It functions in the pathway cofactor biosynthesis; biotin biosynthesis; biotin from 7,8-diaminononanoate: step 2/2. Catalyzes the conversion of dethiobiotin (DTB) to biotin by the insertion of a sulfur atom into dethiobiotin via a radical-based mechanism. The polypeptide is Biotin synthase (Alteromonas mediterranea (strain DSM 17117 / CIP 110805 / LMG 28347 / Deep ecotype)).